Here is a 396-residue protein sequence, read N- to C-terminus: Multidrug efflux protein YfmO (396 aa).

The next 12 membrane-spanning stretches (helical) occupy residues 20 to 40 (VWAV…VDPI), 56 to 76 (SLLF…SGAI), 80 to 100 (IGAK…AGLG), 114 to 134 (GGWG…IVGV), 142 to 162 (AIIL…LAGG), 171 to 191 (APFF…SFML), 214 to 234 (GLLT…ILLA), 249 to 269 (YVFF…APLV), 278 to 298 (SLVV…IWTD), 301 to 321 (TLII…NTIM), 339 to 359 (AYSS…GMLS), and 364 to 384 (ASTP…VLLM).

The protein belongs to the major facilitator superfamily.

The protein resides in the cell membrane. Acts to efflux copper or a copper complex. It is possible that YfmO could contribute to copper resistance. This Bacillus subtilis (strain 168) protein is Multidrug efflux protein YfmO (yfmO).